The chain runs to 250 residues: MAGHSKWANIKHRKGAQDAKRGKIFTRLIKEITVSARMGGGDAATNPRLRSAITAARAQNLPKDTMDKAIKRGTGELEGVNYEEVRFEGYGPGGVAIIVDCLTDNNNRTVADVRHIFNKYGGNMGTHGCVAFMFDKKGQIMFDAEGINEDAIIEAALEAGAEDVVHEGDSFEVLTDPNDFSDVLEALATAGFATPSEAEVVMRPQNLQQLDEQQASTMLKLYEKLEENEDVQNIYANFDISDEIMETLSA.

Belongs to the TACO1 family.

Its subcellular location is the cytoplasm. This chain is Probable transcriptional regulatory protein Mmc1_0479, found in Magnetococcus marinus (strain ATCC BAA-1437 / JCM 17883 / MC-1).